The chain runs to 1141 residues: DNA polymerase II large subunit (1141 aa).

Residues 567 to 587 (AGTRVGGRMGRPGKSAPRKMK) are disordered.

It belongs to the archaeal DNA polymerase II family. In terms of assembly, heterodimer of a large subunit and a small subunit.

The enzyme catalyses DNA(n) + a 2'-deoxyribonucleoside 5'-triphosphate = DNA(n+1) + diphosphate. It carries out the reaction Exonucleolytic cleavage in the 3'- to 5'-direction to yield nucleoside 5'-phosphates.. Its function is as follows. Possesses two activities: a DNA synthesis (polymerase) and an exonucleolytic activity that degrades single-stranded DNA in the 3'- to 5'-direction. Has a template-primer preference which is characteristic of a replicative DNA polymerase. The polypeptide is DNA polymerase II large subunit (Methanocorpusculum labreanum (strain ATCC 43576 / DSM 4855 / Z)).